Here is a 387-residue protein sequence, read N- to C-terminus: 3-ketoacyl-CoA thiolase (387 aa).

Residue C91 is the Acyl-thioester intermediate of the active site. Active-site proton acceptor residues include H343 and C373.

The protein belongs to the thiolase-like superfamily. Thiolase family. Heterotetramer of two alpha chains (FadB) and two beta chains (FadA).

It localises to the cytoplasm. It carries out the reaction an acyl-CoA + acetyl-CoA = a 3-oxoacyl-CoA + CoA. It participates in lipid metabolism; fatty acid beta-oxidation. Its function is as follows. Catalyzes the final step of fatty acid oxidation in which acetyl-CoA is released and the CoA ester of a fatty acid two carbons shorter is formed. This is 3-ketoacyl-CoA thiolase from Shewanella sp. (strain MR-7).